The primary structure comprises 47 residues: Ruminococcin-A (47 aa).

An N-terminal signal peptide occupies residues 1–23; it reads MRNDVLTLTNPMEEKELEQILGG. Thr30 and Thr39 each carry 2,3-didehydrobutyrine. The beta-methyllanthionine (Thr-Cys) cross-link spans 30 to 35; sequence TISHEC. The segment at residues 32–46 is a cross-link (lanthionine (Ser-Cys)); that stretch reads SHECNMNTWQFLFTC. The segment at residues 45 to 47 is a cross-link (beta-methyllanthionine (Thr-Cys)); the sequence is TCC.

Maturation of lantibiotics involves the enzymatic conversion of Thr, and Ser into dehydrated AA and the formation of thioether bonds with cysteine. This is followed by membrane translocation and cleavage of the modified precursor. In terms of processing, it is not established whether the 2,3-didehydrobutyrine is the E- or Z-isomer.

Its subcellular location is the secreted. Functionally, lanthionine-containing peptide antibiotic (lantibiotic) active on Gram-positive bacteria. The bactericidal activity of lantibiotics is based on depolarization of energized bacterial cytoplasmic membranes, initiated by the formation of aqueous transmembrane pores. Ruminococcin A is a broad spectrum bacteriocin exhibiting activity against a wide range of pathogenic clostridia and B.longum. The protein is Ruminococcin-A (rumA1) of Mediterraneibacter gnavus (Ruminococcus gnavus).